Consider the following 271-residue polypeptide: OX-2 membrane glycoprotein homolog (271 aa).

An N-terminal signal peptide occupies residues 1 to 24 (MSSLFISLPWVAFIWLALLGAVGG). Over 25–227 (ARVQGPMRGS…QGPLAHDLPA (203 aa)) the chain is Extracellular. In terms of domain architecture, Ig-like V-type spans 26-129 (RVQGPMRGSA…SCTACLEVTS (104 aa)). Cysteines 39 and 109 form a disulfide. N-linked (GlcNAc...) asparagine; by host glycosylation is found at Asn-83, Asn-91, Asn-138, Asn-157, Asn-166, and Asn-208. The region spanning 130–220 (PPTGHVQVNS…ISIPASIQGP (91 aa)) is the Ig-like C2-type domain. A disulfide bridge links Cys-148 with Cys-202. The chain crosses the membrane as a helical span at residues 228-248 (AQGTLAGVAITLVGLFGIFAL). Residues 249 to 271 (HHCRRKQGGASPTSDDMDPLSTQ) lie on the Cytoplasmic side of the membrane.

As to quaternary structure, interacts with human CD200R1. In terms of processing, N-glycosylated.

It is found in the host cell membrane. Dramatically stimulates primary monocytes, macrophages, and dendritic cells to produce the inflammatory cytokines interleukin 1-beta, IL-6, monocyte chemoattractant protein 1, and TNF-alpha. The induction of inflammatory cytokine production potentially promotes the cytokine-mediated angiogenic proliferation of KSHV-infected cells. This Human herpesvirus 8 type P (isolate GK18) (HHV-8) protein is OX-2 membrane glycoprotein homolog (K14).